The chain runs to 775 residues: K(+)-insensitive pyrophosphate-energized proton pump (775 aa).

Transmembrane regions (helical) follow at residues Ser9 to Ile29, Ile65 to Pro85, Ala108 to Val128, Met160 to Ala180, and Leu185 to Ile205. Residue Lys208 coordinates substrate. Mg(2+) is bound by residues Asp211, Asp215, and Asp241. The next 6 membrane-spanning stretches (helical) occupy residues Val259–Ile279, Phe288–Leu308, Phe327–Val347, Phe359–Phe379, Ser413–Gly433, and Ala442–Ile462. Position 472 (Asp472) interacts with Mg(2+). 4 helical membrane-spanning segments follow: residues Ile508–Val528, Pro555–Ile575, Leu622–Val642, and Ala644–Ala664. Ca(2+) contacts are provided by Asp671, Asp697, and Asp701. Lys704 contacts substrate. The next 2 helical transmembrane spans lie at Ala710–Val730 and Gly735–Trp755.

This sequence belongs to the H(+)-translocating pyrophosphatase (TC 3.A.10) family. K(+)-insensitive subfamily. As to quaternary structure, homodimer. The cofactor is Mg(2+).

It localises to the cell membrane. The enzyme catalyses diphosphate + H2O + H(+)(in) = 2 phosphate + 2 H(+)(out). In terms of biological role, proton pump that utilizes the energy of pyrophosphate hydrolysis as the driving force for proton movement across the membrane. Generates a proton motive force. This Chloroflexus aurantiacus (strain ATCC 29366 / DSM 635 / J-10-fl) protein is K(+)-insensitive pyrophosphate-energized proton pump.